Reading from the N-terminus, the 1947-residue chain is DNA-directed RNA polymerase subunit beta' (1947 aa).

4 residues coordinate Zn(2+): Cys119, Cys121, Cys141, and Cys144. 3 residues coordinate Mg(2+): Asp1778, Asp1780, and Asp1782.

This sequence belongs to the RNA polymerase beta' chain family. RpoC1 subfamily. In terms of assembly, in plastids the minimal PEP RNA polymerase catalytic core is composed of four subunits: alpha, beta, beta', and beta''. When a (nuclear-encoded) sigma factor is associated with the core the holoenzyme is formed, which can initiate transcription. Requires Mg(2+) as cofactor. Zn(2+) is required as a cofactor.

The protein resides in the plastid. Its subcellular location is the chloroplast. It carries out the reaction RNA(n) + a ribonucleoside 5'-triphosphate = RNA(n+1) + diphosphate. Functionally, DNA-dependent RNA polymerase catalyzes the transcription of DNA into RNA using the four ribonucleoside triphosphates as substrates. This chain is DNA-directed RNA polymerase subunit beta', found in Oedogonium cardiacum (Filamentous green alga).